A 1107-amino-acid chain; its full sequence is RNA-dependent RNA polymerase 1 (1107 aa).

The protein belongs to the RdRP family.

It catalyses the reaction RNA(n) + a ribonucleoside 5'-triphosphate = RNA(n+1) + diphosphate. RNA-dependent direct polymerase involved in antiviral silencing. Required for the production of some small RNAs (mainly 21 and some 22 nucleotides) derived from the crucifer-infecting tobamovirus (TMV-cg). Required for turnip mosaic virus (TuMV) silencing and accumulation of viral siRNAs. Involved in cucumber mosaic virus (CMV) silencing. Required for the biogenesis of viral secondary siRNAs, process that follows the production of primary siRNAs derived from viral RNA replication. Specifically targets the positive-strand of the 3 RNA genomes of CMV and preferentially amplifies the 5'-terminal siRNAs of each viral genomic RNA. Not involved in the production of siRNAs derived from a single-stranded 336-nucleotide satellite RNA of CMV. This is RNA-dependent RNA polymerase 1 (RDR1) from Arabidopsis thaliana (Mouse-ear cress).